The chain runs to 163 residues: Nucleotide-binding protein NFA_51200 (163 aa).

It belongs to the YajQ family.

Its function is as follows. Nucleotide-binding protein. The protein is Nucleotide-binding protein NFA_51200 of Nocardia farcinica (strain IFM 10152).